Consider the following 405-residue polypeptide: Phosphopentomutase (405 aa).

6 residues coordinate Mn(2+): Asp-10, Asp-305, His-310, Asp-346, His-347, and His-358.

The protein belongs to the phosphopentomutase family. Requires Mn(2+) as cofactor.

It localises to the cytoplasm. The catalysed reaction is 2-deoxy-alpha-D-ribose 1-phosphate = 2-deoxy-D-ribose 5-phosphate. The enzyme catalyses alpha-D-ribose 1-phosphate = D-ribose 5-phosphate. It functions in the pathway carbohydrate degradation; 2-deoxy-D-ribose 1-phosphate degradation; D-glyceraldehyde 3-phosphate and acetaldehyde from 2-deoxy-alpha-D-ribose 1-phosphate: step 1/2. Isomerase that catalyzes the conversion of deoxy-ribose 1-phosphate (dRib-1-P) and ribose 1-phosphate (Rib-1-P) to deoxy-ribose 5-phosphate (dRib-5-P) and ribose 5-phosphate (Rib-5-P), respectively. The polypeptide is Phosphopentomutase (Methylorubrum extorquens (strain CM4 / NCIMB 13688) (Methylobacterium extorquens)).